Here is a 189-residue protein sequence, read N- to C-terminus: Ribosome maturation factor RimM (189 aa).

In terms of domain architecture, PRC barrel spans 95–169; sequence DEDEFFQTDL…IIKVEPHAAG (75 aa). The disordered stretch occupies residues 168–189; sequence AGLIADEHDNPPHESGKKPKKP. Residues 172–189 are compositionally biased toward basic and acidic residues; that stretch reads ADEHDNPPHESGKKPKKP.

Belongs to the RimM family. In terms of assembly, binds ribosomal protein uS19.

The protein localises to the cytoplasm. Functionally, an accessory protein needed during the final step in the assembly of 30S ribosomal subunit, possibly for assembly of the head region. Essential for efficient processing of 16S rRNA. May be needed both before and after RbfA during the maturation of 16S rRNA. It has affinity for free ribosomal 30S subunits but not for 70S ribosomes. The sequence is that of Ribosome maturation factor RimM from Brucella abortus (strain S19).